Here is a 207-residue protein sequence, read N- to C-terminus: Uracil phosphoribosyltransferase (207 aa).

Residues Arg77, Arg102, and 129 to 137 contribute to the 5-phospho-alpha-D-ribose 1-diphosphate site; that span reads DPMLATGGS. Residues Ile192 and 197 to 199 contribute to the uracil site; that span reads GDA. Asp198 is a 5-phospho-alpha-D-ribose 1-diphosphate binding site.

Belongs to the UPRTase family. Requires Mg(2+) as cofactor.

The enzyme catalyses UMP + diphosphate = 5-phospho-alpha-D-ribose 1-diphosphate + uracil. It functions in the pathway pyrimidine metabolism; UMP biosynthesis via salvage pathway; UMP from uracil: step 1/1. With respect to regulation, allosterically activated by GTP. Functionally, catalyzes the conversion of uracil and 5-phospho-alpha-D-ribose 1-diphosphate (PRPP) to UMP and diphosphate. This is Uracil phosphoribosyltransferase from Ureaplasma parvum serovar 3 (strain ATCC 27815 / 27 / NCTC 11736).